Here is a 174-residue protein sequence, read N- to C-terminus: Small ribosomal subunit protein uS12m (174 aa).

It belongs to the universal ribosomal protein uS12 family. As to quaternary structure, component of the mitochondrial small ribosomal subunit (mt-SSU). Mature N.crassa 74S mitochondrial ribosomes consist of a small (37S) and a large (54S) subunit. The 37S small subunit contains a 16S ribosomal RNA (16S mt-rRNA) and 32 different proteins. The 54S large subunit contains a 23S rRNA (23S mt-rRNA) and 42 different proteins. uS12m forms part of the decoding center of the mt-SSU.

Its subcellular location is the mitochondrion. Functionally, component of the mitochondrial ribosome (mitoribosome), a dedicated translation machinery responsible for the synthesis of mitochondrial genome-encoded proteins, including at least some of the essential transmembrane subunits of the mitochondrial respiratory chain. The mitoribosomes are attached to the mitochondrial inner membrane and translation products are cotranslationally integrated into the membrane. In Neurospora crassa (strain ATCC 24698 / 74-OR23-1A / CBS 708.71 / DSM 1257 / FGSC 987), this protein is Small ribosomal subunit protein uS12m (mrps12).